The following is a 114-amino-acid chain: Large ribosomal subunit protein P1 (114 aa).

Residues 55–114 (EEAAAAPAAAPAASGSDDEAAADDGDDDEEADADEAAEAEDAGDDDDEEPSGEGLGDLFG) are disordered. Residues 56–69 (EAAAAPAAAPAASG) are compositionally biased toward low complexity. Over residues 70-105 (SDDEAAADDGDDDEEADADEAAEAEDAGDDDDEEPS) the composition is skewed to acidic residues.

This sequence belongs to the eukaryotic ribosomal protein P1/P2 family. In terms of assembly, part of the 50S ribosomal subunit. Homodimer, it forms part of the ribosomal stalk which helps the ribosome interact with GTP-bound translation factors. Forms a heptameric uL10/P0(P1)2(P1)2(P1)2 complex, where uL10/P0 forms an elongated spine to which the P1 dimers bind in a sequential fashion.

Its function is as follows. Forms part of the ribosomal stalk, playing a central role in the interaction of the ribosome with GTP-bound translation factors. This Halobacterium salinarum (strain ATCC 700922 / JCM 11081 / NRC-1) (Halobacterium halobium) protein is Large ribosomal subunit protein P1.